The chain runs to 375 residues: Glutaconyl-CoA decarboxylase subunit beta (375 aa).

11 helical membrane passes run 16 to 39, 46 to 65, 74 to 96, 107 to 130, 137 to 153, 160 to 178, 208 to 232, 254 to 271, 284 to 302, 316 to 332, and 345 to 369; these read GFVAFTWGNAVMMLVGCILLYLAI, LLLSPIAFGCILANVPRTGF, LILGGIKYEIFPPLIFMGVGAMT, TLLLGAAAQIGVFVALLGAMLLGF, AIGIIGGADGPTSIYLA, LLGAIAVAAYSYMSLVPLI, VVFPIVTTIFISLLLPSVCSLIGML, ALMNSVTIMLATGTGLTM, IICLGLVAFIGGTAGGVLF, PLIGSAGVSAVPMAARV, and FLLMHAMGPNVAGVIGTAVAAGTML.

Belongs to the GcdB/MmdB/OadB family. As to quaternary structure, heterooctamer consisting of two alpha, two beta, two gamma and two delta subunits. In terms of processing, the N-terminus is blocked.

The protein resides in the cell membrane. The enzyme catalyses (2E)-glutaconyl-CoA + Na(+)(in) + H(+) = (2E)-butenoyl-CoA + Na(+)(out) + CO2. The protein operates within amino-acid degradation; L-glutamate degradation via hydroxyglutarate pathway; crotonoyl-CoA from L-glutamate: step 5/5. Its function is as follows. Tunnel subunit of the primary sodium pump glutaconyl-CoA decarboxylase (GCD). In Acidaminococcus fermentans (strain ATCC 25085 / DSM 20731 / CCUG 9996 / CIP 106432 / VR4), this protein is Glutaconyl-CoA decarboxylase subunit beta (gcdB).